Here is a 321-residue protein sequence, read N- to C-terminus: Glucokinase (321 aa).

8-13 (GDVGGT) contributes to the ATP binding site.

It belongs to the bacterial glucokinase family.

It localises to the cytoplasm. The catalysed reaction is D-glucose + ATP = D-glucose 6-phosphate + ADP + H(+). In Shigella sonnei (strain Ss046), this protein is Glucokinase.